The sequence spans 459 residues: ATP synthase subunit beta (459 aa).

Residue 148–155 (GGAGVGKT) coordinates ATP.

This sequence belongs to the ATPase alpha/beta chains family. As to quaternary structure, F-type ATPases have 2 components, CF(1) - the catalytic core - and CF(0) - the membrane proton channel. CF(1) has five subunits: alpha(3), beta(3), gamma(1), delta(1), epsilon(1). CF(0) has three main subunits: a(1), b(2) and c(9-12). The alpha and beta chains form an alternating ring which encloses part of the gamma chain. CF(1) is attached to CF(0) by a central stalk formed by the gamma and epsilon chains, while a peripheral stalk is formed by the delta and b chains.

The protein resides in the cell inner membrane. It catalyses the reaction ATP + H2O + 4 H(+)(in) = ADP + phosphate + 5 H(+)(out). Produces ATP from ADP in the presence of a proton gradient across the membrane. The catalytic sites are hosted primarily by the beta subunits. This chain is ATP synthase subunit beta, found in Burkholderia mallei (strain NCTC 10229).